The sequence spans 295 residues: Sulfotransferase 1E1 (295 aa).

48–53 (KSGTTW) contacts 3'-phosphoadenylyl sulfate. 106-108 (KSH) lines the substrate pocket. Residue His108 is the Proton acceptor of the active site. The 3'-phosphoadenylyl sulfate site is built by Arg130, Ser138, and Tyr193. 2 positions are modified to phosphoserine; by PKA: Ser216 and Ser228. 3'-phosphoadenylyl sulfate contacts are provided by residues 227–232 (TSFQEM) and 257–259 (RKG).

It belongs to the sulfotransferase 1 family. In terms of assembly, homodimer.

The protein localises to the cytoplasm. Its subcellular location is the cytosol. It carries out the reaction estrone + 3'-phosphoadenylyl sulfate = estrone 3-sulfate + adenosine 3',5'-bisphosphate + H(+). It catalyses the reaction (24S)-hydroxycholesterol + 3'-phosphoadenylyl sulfate = (24S)-hydroxycholesterol 3-sulfate + adenosine 3',5'-bisphosphate + H(+). The catalysed reaction is 17beta-estradiol + 3'-phosphoadenylyl sulfate = 17beta-estradiol 3-sulfate + adenosine 3',5'-bisphosphate + H(+). The enzyme catalyses 3beta-hydroxyandrost-5-en-17-one + 3'-phosphoadenylyl sulfate = dehydroepiandrosterone 3-sulfate + adenosine 3',5'-bisphosphate + H(+). It carries out the reaction 4-ethylphenol + 3'-phosphoadenylyl sulfate = 4-ethylphenyl sulfate + adenosine 3',5'-bisphosphate + H(+). Its activity is regulated as follows. Inhibited by estradiol. Functionally, sulfotransferase that utilizes 3'-phospho-5'-adenylyl sulfate (PAPS) as sulfonate donor to catalyze the sulfate conjugation of estradiol and estrone. Is a key enzyme in estrogen homeostasis, the sulfation of estrogens leads to their inactivation. Also sulfates dehydroepiandrosterone (DHEA), pregnenolone, (24S)-hydroxycholesterol and xenobiotic compounds like ethinylestradiol, equalenin, diethyl stilbesterol and 1-naphthol at significantly lower efficiency. Does not sulfonate cortisol, testosterone and dopamine. May play a role in gut microbiota-host metabolic interaction. O-sulfonates 4-ethylphenol (4-EP), a dietary tyrosine-derived metabolite produced by gut bacteria. The product 4-EPS crosses the blood-brain barrier and may negatively regulate oligodendrocyte maturation and myelination, affecting the functional connectivity of different brain regions associated with the limbic system. This chain is Sulfotransferase 1E1 (SULT1E1), found in Bos taurus (Bovine).